The primary structure comprises 366 residues: MTPEHLPTEQYEAQLAEKVARLQSMMAPFSDLVPEVFRSPVSHYRMRAEFRLWHDGDDLYHIMFDQQTKSRIRVDTFPAASQLINTLMKAMIAGVRDNHALRHKLFQMDYLTTLSNQAVVSLLYHKKLDEEWREAATALRDALRAQGLNVHLIGRATKTKIELDQDYIDERLPVAGKEMIYRQVENSFTQPNAAMNIQMLEWALEVTKDSKGDLLELYCGNGNFSLALARNFNRVLATEIAKPSVAAAQYNIAANHIDNVQIIRMAAEEFTLAMNGVREFNRLQGIDLKGYQCETIFVDPPRSGLDSETEKMVQAYPRILYISCNPETLCKNLETLSQTHTVSRLALFDQFPYTHHMECGVLLTAR.

Residues Q190, Y218, N223, E239, and D299 each contribute to the S-adenosyl-L-methionine site. C324 serves as the catalytic Nucleophile. The active-site Proton acceptor is the E358.

The protein belongs to the class I-like SAM-binding methyltransferase superfamily. RNA M5U methyltransferase family. TrmA subfamily.

It carries out the reaction uridine(54) in tRNA + S-adenosyl-L-methionine = 5-methyluridine(54) in tRNA + S-adenosyl-L-homocysteine + H(+). The catalysed reaction is uridine(341) in tmRNA + S-adenosyl-L-methionine = 5-methyluridine(341) in tmRNA + S-adenosyl-L-homocysteine + H(+). Its function is as follows. Dual-specificity methyltransferase that catalyzes the formation of 5-methyluridine at position 54 (m5U54) in all tRNAs, and that of position 341 (m5U341) in tmRNA (transfer-mRNA). The polypeptide is tRNA/tmRNA (uracil-C(5))-methyltransferase (Salmonella newport (strain SL254)).